Reading from the N-terminus, the 810-residue chain is Eukaryotic translation initiation factor 3 subunit C (810 aa).

A compositionally biased stretch (polar residues) spans 1-11 (MSRFFATNYNY). The disordered stretch occupies residues 1–98 (MSRFFATNYN…DSDESDEEDG (98 aa)). Positions 12-33 (DETSSSSEEDLLSSSEELLSSS) are enriched in low complexity. The span at 34–58 (EEGELSDDSLFNDESESESDFDSDD) shows a compositional bias: acidic residues. One can recognise a PCI domain in the interval 605–780 (YHQHINLDLV…TYIVIEKGDE (176 aa)).

The protein belongs to the eIF-3 subunit C family. Component of the eukaryotic translation initiation factor 3 (eIF-3) complex.

The protein resides in the cytoplasm. Its function is as follows. Component of the eukaryotic translation initiation factor 3 (eIF-3) complex, which is involved in protein synthesis of a specialized repertoire of mRNAs and, together with other initiation factors, stimulates binding of mRNA and methionyl-tRNAi to the 40S ribosome. The eIF-3 complex specifically targets and initiates translation of a subset of mRNAs involved in cell proliferation. The chain is Eukaryotic translation initiation factor 3 subunit C from Candida glabrata (strain ATCC 2001 / BCRC 20586 / JCM 3761 / NBRC 0622 / NRRL Y-65 / CBS 138) (Yeast).